We begin with the raw amino-acid sequence, 464 residues long: Adenosylhomocysteinase (464 aa).

The substrate site is built by Thr56, Asp131, and Glu190. Position 191–193 (191–193 (TTT)) interacts with NAD(+). Residues Lys220 and Asp224 each coordinate substrate. Residues Asn225, 254–259 (GFGDVG), Glu277, Asn312, 333–335 (IGH), and Asn378 contribute to the NAD(+) site.

Belongs to the adenosylhomocysteinase family. NAD(+) is required as a cofactor.

Its subcellular location is the cytoplasm. It catalyses the reaction S-adenosyl-L-homocysteine + H2O = L-homocysteine + adenosine. The protein operates within amino-acid biosynthesis; L-homocysteine biosynthesis; L-homocysteine from S-adenosyl-L-homocysteine: step 1/1. Its function is as follows. May play a key role in the regulation of the intracellular concentration of adenosylhomocysteine. The protein is Adenosylhomocysteinase of Zymomonas mobilis subsp. mobilis (strain ATCC 31821 / ZM4 / CP4).